Reading from the N-terminus, the 220-residue chain is Dual specificity phosphatase 29 (220 aa).

The 149-residue stretch at 54 to 202 (HVNEVWPKLY…LRELDKQLVQ (149 aa)) folds into the Tyrosine-protein phosphatase domain. 146 to 153 (HCVMGRSR) is a substrate binding site. Catalysis depends on Cys147, which acts as the Phosphocysteine intermediate.

The protein belongs to the protein-tyrosine phosphatase family. Non-receptor class dual specificity subfamily. In terms of assembly, homodimer. Interacts with PRKAA2.

The protein resides in the cytoplasm. Its subcellular location is the nucleus. It catalyses the reaction O-phospho-L-tyrosyl-[protein] + H2O = L-tyrosyl-[protein] + phosphate. The catalysed reaction is O-phospho-L-seryl-[protein] + H2O = L-seryl-[protein] + phosphate. The enzyme catalyses O-phospho-L-threonyl-[protein] + H2O = L-threonyl-[protein] + phosphate. In terms of biological role, dual specificity phosphatase able to dephosphorylate phosphotyrosine, phosphoserine and phosphothreonine residues within the same substrate, with a preference for phosphotyrosine as a substrate. Involved in the modulation of intracellular signaling cascades. In skeletal muscle regulates systemic glucose homeostasis by activating, AMPK, an energy sensor protein kinase. Affects MAP kinase signaling though modulation of the ERK1/2 cascade in skeletal muscle promoting muscle cell differentiation, development and atrophy. The chain is Dual specificity phosphatase 29 (DUSP29) from Pan troglodytes (Chimpanzee).